A 142-amino-acid chain; its full sequence is Nucleoside diphosphate kinase (142 aa).

Residues Lys10, Phe58, Arg86, Thr92, Arg103, and Asn113 each contribute to the ATP site. His116 serves as the catalytic Pros-phosphohistidine intermediate.

Belongs to the NDK family. As to quaternary structure, homotetramer. It depends on Mg(2+) as a cofactor.

Its subcellular location is the cytoplasm. It carries out the reaction a 2'-deoxyribonucleoside 5'-diphosphate + ATP = a 2'-deoxyribonucleoside 5'-triphosphate + ADP. The enzyme catalyses a ribonucleoside 5'-diphosphate + ATP = a ribonucleoside 5'-triphosphate + ADP. Its function is as follows. Major role in the synthesis of nucleoside triphosphates other than ATP. The ATP gamma phosphate is transferred to the NDP beta phosphate via a ping-pong mechanism, using a phosphorylated active-site intermediate. This is Nucleoside diphosphate kinase from Ehrlichia chaffeensis (strain ATCC CRL-10679 / Arkansas).